The sequence spans 578 residues: Thrombomodulin (578 aa).

A signal peptide spans 1-16 (MLRVLLLGVLAPAGLG). Residues 17–518 (LPTPAQPQPR…SPSPVGPVHS (502 aa)) lie on the Extracellular side of the membrane. The 137-residue stretch at 31–167 (MEHDCFQLFR…CAAEADGFLC (137 aa)) folds into the C-type lectin domain. Asparagine 114 is a glycosylation site (N-linked (GlcNAc...) asparagine). Cystine bridges form between cysteine 137–cysteine 158, cysteine 246–cysteine 257, cysteine 253–cysteine 266, cysteine 268–cysteine 281, cysteine 289–cysteine 297, cysteine 293–cysteine 309, cysteine 311–cysteine 324, cysteine 330–cysteine 341, cysteine 337–cysteine 350, cysteine 352–cysteine 363, cysteine 370–cysteine 379, cysteine 375–cysteine 389, cysteine 391–cysteine 405, cysteine 409–cysteine 414, cysteine 418–cysteine 426, cysteine 428–cysteine 440, cysteine 446–cysteine 455, cysteine 451–cysteine 464, and cysteine 466–cysteine 480. EGF-like domains follow at residues 242–282 (GAWD…RSCA) and 285–325 (AEHS…HRCE). A glycan (N-linked (GlcNAc...) asparagine) is linked at asparagine 300. In terms of domain architecture, EGF-like 3; calcium-binding spans 326–364 (DVDDCIQVPSLCPQLCVNTRGAFECHCYPGYELVDNECV). Asparagine 343 bears the (3R)-3-hydroxyasparagine mark. EGF-like domains lie at 366–406 (PVDP…HRCQ) and 405–441 (CQMFCNQTACPADCDPNSPTSCQCPEGYILDDGFMCT). The N-linked (GlcNAc...) asparagine glycan is linked to asparagine 410. In terms of domain architecture, EGF-like 6; calcium-binding spans 442–481 (DIDECENGECPEACRNLPGTYECICGPDSPLAGQVATDCG). The tract at residues 483 to 512 (IISDPDGDSDSGSGEPPVTPTPGVTPSPSP) is disordered. O-linked (Xyl...) (chondroitin sulfate) serine glycans are attached at residues serine 493 and serine 495. Residues 499 to 512 (PVTPTPGVTPSPSP) show a composition bias toward pro residues. The helical transmembrane segment at 519 to 539 (GVLIGISIASLSLVVALLALL) threads the bilayer. Residues 540–578 (CHLRKKQGAPRAELEYKCGAPAKEVVLQHVRTEQMPQKL) lie on the Cytoplasmic side of the membrane.

In terms of assembly, interacts with ITGAL, ITGAM and ITGB2. Interacts with thrombin/F2; this interaction switches the specificity of thrombin from a procoagulant to an anticoagulant and antifibrinolytic protease. Interacts with ANGP1 and ANGP2; these interactions significantly inhibit the generation of activated PC and TAFIa/CPB2 by the thrombin/thrombomodulin complex. Interacts with PF4; this interaction enhances generation of activated protein C. Interacts with HMGB1; this interaction inhibits HMGB1 inflammatory activity. In terms of processing, N-glycosylated. Post-translationally, the iron and 2-oxoglutarate dependent 3-hydroxylation of aspartate and asparagine is (R) stereospecific within EGF domains. In terms of tissue distribution, expressed in lung, liver, spleen, kidney, pancreas and lymph node. Low expression in heart, cerebrum, urinary bladder and uterus.

It localises to the membrane. Endothelial cell receptor that plays a critical role in regulating several physiological processes including hemostasis, coagulation, fibrinolysis, inflammation, and angiogenesis. Acts as a cofactor for thrombin activation of protein C/PROC on the surface of vascular endothelial cells leading to initiation of the activated protein C anticoagulant pathway. Also accelerates the activation of the plasma carboxypeptidase B2/CPB2, which catalyzes removal of C-terminal basic amino acids from its substrates including kinins or anaphylatoxins leading to fibrinolysis inhibition. Plays critical protective roles in changing the cleavage specificity of protease-activated receptor 1/PAR1, inhibiting endothelial cell permeability and inflammation. Suppresses inflammation distinctly from its anticoagulant cofactor activity by sequestering HMGB1 thereby preventing it from engaging cellular receptors such as RAGE and contributing to the inflammatory response. This is Thrombomodulin (THBD) from Canis lupus familiaris (Dog).